The primary structure comprises 663 residues: Nucleolar complex-associated protein 3 (663 aa).

A disordered region spans residues 1-132 (MAKRNRSQFR…AKEDEPDTEE (132 aa)). A compositionally biased stretch (basic and acidic residues) spans 82-97 (GKVERKLHKAQEKPKD). Acidic residues predominate over residues 98-130 (DDEEDEDSNDSSEDDEGPNEEQEAEAKEDEPDT). The stretch at 363–408 (KKDRVHLSKKQRKARKEMQQIEEEMRNAEQAVSAEERERNQSEILK) forms a coiled coil. A Phosphoserine modification is found at serine 395.

Belongs to the CBF/MAK21 family. As to quaternary structure, forms a heterodimer with NOC2. This complex may be associated with pre-ribosomal particles. Also interacts with MCM2, MCM5 and ORC1.

It is found in the nucleus. It localises to the nucleolus. Functionally, required for synthesis of 60S ribosomal subunits and the transport of pre-ribosomes from the nucleoplasm to the cytoplasm. Also required for initiation of DNA replication. May function downstream of the origin recognition complex (ORC complex) in the loading of CDC6 and the minichromosome maintenance complex (MCM complex) onto chromatin during the G1 phase of the cell cycle. Essential for growth. This Saccharomyces cerevisiae (strain ATCC 204508 / S288c) (Baker's yeast) protein is Nucleolar complex-associated protein 3 (NOC3).